The chain runs to 117 residues: Basic phospholipase A2 pseudexin B chain (117 aa).

Cystine bridges form between cysteine 11–cysteine 71, cysteine 27–cysteine 117, cysteine 29–cysteine 45, cysteine 44–cysteine 98, cysteine 51–cysteine 91, cysteine 60–cysteine 84, and cysteine 78–cysteine 89. Ca(2+) contacts are provided by tyrosine 28, glycine 30, and glycine 32. Histidine 48 is an active-site residue. Aspartate 49 lines the Ca(2+) pocket. Aspartate 92 is a catalytic residue.

The protein belongs to the phospholipase A2 family. Group I subfamily. D49 sub-subfamily. Ca(2+) is required as a cofactor. Expressed by the venom gland.

It localises to the secreted. It catalyses the reaction a 1,2-diacyl-sn-glycero-3-phosphocholine + H2O = a 1-acyl-sn-glycero-3-phosphocholine + a fatty acid + H(+). In terms of biological role, PLA2 catalyzes the calcium-dependent hydrolysis of the 2-acyl groups in 3-sn-phosphoglycerides. The polypeptide is Basic phospholipase A2 pseudexin B chain (Pseudechis porphyriacus (Red-bellied black snake)).